The primary structure comprises 238 residues: Sugar fermentation stimulation protein homolog (238 aa).

The protein belongs to the SfsA family.

The protein is Sugar fermentation stimulation protein homolog of Vibrio vulnificus (strain YJ016).